The chain runs to 677 residues: Secretogranin-1 (677 aa).

An N-terminal signal peptide occupies residues 1-20; it reads MQPTLLLSLLGAVGLAAVNS. Cys36 and Cys57 are oxidised to a cystine. Basic and acidic residues-rich tracts occupy residues 64–100 and 118–136; these read SRKD…ESSS and ADTE…RADE. A disordered region spans residues 64-463; that stretch reads SRKDVKDKET…DKARRHPQGA (400 aa). Thr79 carries the phosphothreonine modification. A phosphoserine mark is found at Ser93, Ser99, and Ser100. Ser93 carries O-linked (Xyl...) (chondroitin sulfate) serine glycosylation. The segment at 116–120 is O-glycosylated at one site; sequence TKADT. Phosphoserine; by FAM20C is present on Ser130. Phosphoserine is present on Ser149. Basic and acidic residues-rich tracts occupy residues 150-162, 172-190, and 200-236; these read EEVK…KSQR, NYQK…HLEE, and NERK…EKSS. Phosphoserine is present on Ser183. Ser225 carries the phosphoserine; by FAM20C modification. A glycan (O-linked (Xyl...) (chondroitin sulfate) serine) is linked at Ser239. Phosphoserine occurs at positions 259 and 263. Residues 262-272 are compositionally biased toward acidic residues; sequence ESEEGEEDATS. A compositionally biased stretch (basic residues) spans 277–287; the sequence is RRTRPRHHHGR. Phosphoserine is present on residues Ser293, Ser294, Ser311, and Ser335. The residue at position 341 (Tyr341) is a Sulfotyrosine. A compositionally biased stretch (basic and acidic residues) spans 359–372; sequence WERYRGRGSEEYRA. 3 positions are modified to phosphoserine; by FAM20C: Ser367, Ser377, and Ser380. Composition is skewed to basic and acidic residues over residues 384 to 415 and 433 to 455; these read EDKR…EPGK and DTRE…QMDK. Tyr401 bears the Phosphotyrosine mark. Ser405 is modified (phosphoserine). At Tyr474 the chain carries Sulfotyrosine. The segment at 475–512 is disordered; the sequence is GEEGAPGKWQQQGDLQDTKENREEARFQDKQYSSHHTA. Basic and acidic residues predominate over residues 490–503; that stretch reads QDTKENREEARFQD. 2 positions are modified to phosphoserine: Ser533 and Ser534. A Sulfotyrosine modification is found at Tyr566. The residue at position 617 (Ser617) is a Phosphoserine. The disordered stretch occupies residues 622-653; sequence DFYDSEEPVSTHQEAENEKDRADQTVLTEDEK. A Sulfotyrosine modification is found at Tyr624. Ser626 and Ser631 each carry phosphoserine. Over residues 634 to 653 the composition is skewed to basic and acidic residues; it reads QEAENEKDRADQTVLTEDEK.

It belongs to the chromogranin/secretogranin protein family. In terms of assembly, interacts with ITPR1 in the secretory granules. Post-translationally, extensively processed by limited proteolysis at conserved basic residues. Alternative processing are seen in different tissues. In terms of processing, O-glycosylated. As to expression, detected in cerebrospinal fluid and urine (at protein level). Expressed in the adrenal medulla, and in pheochromocytoma. Not expressed in liver.

The protein resides in the secreted. Secretogranin-1 is a neuroendocrine secretory granule protein, which may be the precursor for other biologically active peptides. The chain is Secretogranin-1 (CHGB) from Homo sapiens (Human).